The sequence spans 802 residues: Endoplasmin (802 aa).

Positions Met-1–Ala-21 are cleaved as a signal peptide. Positions Ser-42–Thr-44 match the SRT pseudosubstrate motif motif. A glycan (N-linked (GlcNAc...) asparagine) is linked at Asn-62. A Phosphoserine modification is found at Ser-64. Asn-107 carries N-linked (GlcNAc...) asparagine glycosylation. Residues Asn-107, Asp-149, and Asn-162 each contribute to the ATP site. Lys-168 is modified (N6-(2-hydroxyisobutyryl)lysine). Ser-172 bears the Phosphoserine mark. Phe-199 serves as a coordination point for ATP. N-linked (GlcNAc...) asparagine glycosylation occurs at Asn-217. Positions Thr-288–Thr-323 are disordered. Residues Val-289 to Glu-317 are compositionally biased toward acidic residues. The residue at position 403 (Ser-403) is a Phosphoserine. N6-succinyllysine is present on Lys-404. N-linked (GlcNAc...) asparagine glycosylation occurs at Asn-445. The residue at position 447 (Ser-447) is a Phosphoserine. Lys-479 is modified (N6-acetyllysine). N-linked (GlcNAc...) asparagine glycosylation is found at Asn-481 and Asn-502. N6-succinyllysine is present on Lys-633. The disordered stretch occupies residues Asp-750 to Leu-802. Over residues Glu-757–Gln-789 the composition is skewed to acidic residues. Phosphothreonine is present on Thr-782. Basic and acidic residues predominate over residues Glu-790–Leu-802. The short motif at Lys-799 to Leu-802 is the Prevents secretion from ER element.

Belongs to the heat shock protein 90 family. Homodimer; disulfide-linked. Component of an EIF2 complex at least composed of CELF1/CUGBP1, CALR, CALR3, EIF2S1, EIF2S2, HSP90B1 and HSPA5. Part of a large chaperone multiprotein complex comprising DNAJB11, HSP90B1, HSPA5, HYOU, PDIA2, PDIA4, PDIA6, PPIB, SDF2L1, UGGT1 and very small amounts of ERP29, but not, or at very low levels, CALR nor CANX. Interacts with AIMP1; regulates its retention in the endoplasmic reticulum. Hyperglycosylated form interacts with OS9; promoting its degradation by the endoplasmic reticulum associated degradation (ERAD). Interacts with CNPY3. This interaction is disrupted in the presence of ATP. Interacts with TLR4 and TLR9, but not with TLR3. Interacts with MZB1 in a calcium-dependent manner. Interacts with METTL23. Interacts with IL1B; the interaction facilitates cargo translocation into the ERGIC. Interacts with EIF2AK3. In terms of processing, phosphorylated by CK2. N-glycosylated cotranslationally at Asn-217 by STT3A-containing OST-A complex: this glycosylation is constitutive. In response to various stress, 5 additional facultative sites (Asn-62, Asn-107, Asn-445, Asn-481 and Asn-502) can be glycosylated post-translationally by STT3B-containing OST-B complex, leading to a hyperglycosylated form that is degraded by the ER-associated degradation (ERAD) pathway. In normal conditions, the OST-A complex together with CCDC134 prevent glycosylation at facultative sites during protein folding, thereby preventing hyperglycosylation. Mechanistically, nascent HSP90B1 is tethered during translation to a specialized CCDC134-containing translocon that forms a microenvironment for its folding, in which STT3A associates with the SRT pseudosubstrate motif, and prevents access to facultative glycosylation sites until folding is completed, rendering its facultative sites inaccessible to the OST-B complex.

It is found in the endoplasmic reticulum lumen. Its subcellular location is the sarcoplasmic reticulum lumen. It localises to the melanosome. The enzyme catalyses ATP + H2O = ADP + phosphate + H(+). ATP-dependent chaperone involved in the processing of proteins in the endoplasmic reticulum, regulating their transport. Together with MESD, acts as a modulator of the Wnt pathway by promoting the folding of LRP6, a coreceptor of the canonical Wnt pathway. When associated with CNPY3, required for proper folding of Toll-like receptors. Promotes folding and trafficking of TLR4 to the cell surface. May participate in the unfolding of cytosolic leaderless cargos (lacking the secretion signal sequence) such as the interleukin 1/IL-1 to facilitate their translocation into the ERGIC (endoplasmic reticulum-Golgi intermediate compartment) and secretion; the translocation process is mediated by the cargo receptor TMED10. This chain is Endoplasmin (HSP90B1), found in Oryctolagus cuniculus (Rabbit).